Reading from the N-terminus, the 380-residue chain is Putative 8-amino-7-oxononanoate synthase (380 aa).

Residue arginine 18 coordinates substrate. Pyridoxal 5'-phosphate is bound at residue 106–107 (GY). Histidine 131 contacts substrate. Pyridoxal 5'-phosphate is bound by residues serine 179, 205-208 (DEAH), and 236-239 (TFGK). An N6-(pyridoxal phosphate)lysine modification is found at lysine 239. Substrate is bound at residue threonine 352.

It belongs to the class-II pyridoxal-phosphate-dependent aminotransferase family. BioF subfamily. Homodimer. Pyridoxal 5'-phosphate serves as cofactor.

The enzyme catalyses 6-carboxyhexanoyl-[ACP] + L-alanine + H(+) = (8S)-8-amino-7-oxononanoate + holo-[ACP] + CO2. It participates in cofactor biosynthesis; biotin biosynthesis. In terms of biological role, catalyzes the decarboxylative condensation of pimeloyl-[acyl-carrier protein] and L-alanine to produce 8-amino-7-oxononanoate (AON), [acyl-carrier protein], and carbon dioxide. This is Putative 8-amino-7-oxononanoate synthase (bioF) from Neisseria meningitidis serogroup C / serotype 2a (strain ATCC 700532 / DSM 15464 / FAM18).